The chain runs to 225 residues: Transcriptional regulatory protein AfsQ1 (225 aa).

In terms of domain architecture, Response regulatory spans 3 to 116 (SLLLIEDDDA…VLDARIRAVL (114 aa)). Position 52 is a 4-aspartylphosphate (aspartate 52). A DNA-binding region (ompR/PhoB-type) is located at residues 124-223 (TDSASFGSLV…VRGVGYRLDP (100 aa)).

In terms of processing, phosphorylated by AfsQ2.

The protein resides in the cytoplasm. It localises to the nucleoid. Functionally, forms part of a two-component regulatory system AfsQ1/AfsQ2 involved in secondary metabolism. The sequence is that of Transcriptional regulatory protein AfsQ1 from Streptomyces coelicolor (strain ATCC BAA-471 / A3(2) / M145).